The chain runs to 95 residues: Small ribosomal subunit protein bS6 (95 aa).

This sequence belongs to the bacterial ribosomal protein bS6 family.

Binds together with bS18 to 16S ribosomal RNA. The polypeptide is Small ribosomal subunit protein bS6 (rpsF) (Halalkalibacterium halodurans (strain ATCC BAA-125 / DSM 18197 / FERM 7344 / JCM 9153 / C-125) (Bacillus halodurans)).